The sequence spans 229 residues: Flagellar L-ring protein (229 aa).

A signal peptide spans 1 to 25 (MKQVRLLPSAAVRAACALAAAALAG). Cysteine 26 carries the N-palmitoyl cysteine lipid modification. Cysteine 26 carries the S-diacylglycerol cysteine lipid modification.

Belongs to the FlgH family. As to quaternary structure, the basal body constitutes a major portion of the flagellar organelle and consists of four rings (L,P,S, and M) mounted on a central rod.

Its subcellular location is the cell outer membrane. The protein localises to the bacterial flagellum basal body. In terms of biological role, assembles around the rod to form the L-ring and probably protects the motor/basal body from shearing forces during rotation. This Burkholderia multivorans (strain ATCC 17616 / 249) protein is Flagellar L-ring protein.